We begin with the raw amino-acid sequence, 578 residues long: Arginine--tRNA ligase (578 aa).

Residues 127 to 137 (PNLAKEMHVGH) carry the 'HIGH' region motif.

The protein belongs to the class-I aminoacyl-tRNA synthetase family. As to quaternary structure, monomer.

The protein resides in the cytoplasm. It catalyses the reaction tRNA(Arg) + L-arginine + ATP = L-arginyl-tRNA(Arg) + AMP + diphosphate. This Pseudomonas putida (strain GB-1) protein is Arginine--tRNA ligase.